The following is an 88-amino-acid chain: Small ribosomal subunit protein uS15c (88 aa).

This sequence belongs to the universal ribosomal protein uS15 family. Part of the 30S ribosomal subunit.

The protein localises to the plastid. It is found in the chloroplast. The chain is Small ribosomal subunit protein uS15c (rps15) from Barbarea verna (Land cress).